Consider the following 383-residue polypeptide: WEGRPQELGGKEIPLCAGCDQHILDRFILKALDRHWHSKCLKCSDCHTPLAERCFSRGESLYCKDDFFKRFGTKCAACQLGIPPTQVVRRAQDFVYHLHCFACVVCKRQLATGDEFYLMEDSRLVCKADYETAKQREAEATAKRPRTTITAKQLETLKSAYNTSPKPARHVREQLSSETGLDMRVVQVWFQNRRAKEKRLKKDAGRQRWGQYFRNMKRARGGSKSDKDSVQEEGQDSDAEVSFTDEPSMAEMGPANGLYGGLGEPAPALGRPSGAPGSFPLEHGGLAGPEQYGELRPSSPYGVPSSPAALQSLPGPQPLLSSLVYPEAGLGLVPAGPPGGPPPMRVLAGNGPSSDLSTGSSGGYPDFPASPASWLDEVDHAQF.

2 LIM zinc-binding domains span residues 14-73 and 73-136; these read PLCA…RFGT and TKCA…AKQR. Residue T48 is modified to Phosphothreonine. S56 is subject to Phosphoserine. The homeobox DNA-binding region spans 142 to 201; it reads AKRPRTTITAKQLETLKSAYNTSPKPARHVREQLSSETGLDMRVVQVWFQNRRAKEKRLK. Residues 197-383 are disordered; it reads EKRLKKDAGR…WLDEVDHAQF (187 aa). Y212 carries the phosphotyrosine modification. S223 carries the post-translational modification Phosphoserine. The span at 307 to 334 shows a compositional bias: low complexity; that stretch reads PAALQSLPGPQPLLSSLVYPEAGLGLVP. Positions 335–344 are enriched in pro residues; that stretch reads AGPPGGPPPM.

Interacts with POU1F1. At neuronal promoters, interacts with LDB1, in motor neurons LDB1 is displaced by ISL1 and a ternary complex is formed in which ISL1 contacts both LHX3 and LDB1; allosteric structural changes in the DNA binding domain of LHX3, induced by the ISL1-LHX3 interaction, may explain differences in sequence specificity of the different complexes. Interacts with LDB2. May interact with CITED2/MRG1.

It localises to the nucleus. Its function is as follows. Transcription factor. Recognizes and binds to the consensus sequence motif 5'-AATTAATTA-3' in the regulatory elements of target genes, such as glycoprotein hormones alpha chain CGA and visual system homeobox CHX10, positively modulating transcription; transcription can be co-activated by LDB2. Synergistically enhances transcription from the prolactin promoter in cooperation with POU1F1/Pit-1. Required for the establishment of the specialized cells of the pituitary gland and the nervous system. Involved in the development of interneurons and motor neurons in cooperation with LDB1 and ISL1. The polypeptide is LIM/homeobox protein Lhx3 (LHX3) (Sus scrofa (Pig)).